The following is a 466-amino-acid chain: Ras GTPase-activating protein-binding protein 1 (466 aa).

Residues 11–133 (VGREFVRQYY…FYVHNDIFRY (123 aa)) enclose the NTF2 domain. Glycyl lysine isopeptide (Lys-Gly) (interchain with G-Cter in ubiquitin) cross-links involve residues lysine 36, lysine 50, lysine 59, lysine 64, lysine 76, and lysine 123. Residues 142 to 225 (VTEPQEESEE…EPVLEETVPE (84 aa)) form an acidic disordered region region. The residue at position 143 (threonine 143) is a Phosphothreonine. 2 disordered regions span residues 144–172 (EPQE…DSGT) and 184–243 (EEHL…QTVQ). Acidic residues-rich tracts occupy residues 145-157 (PQEE…EEPE) and 185-206 (EHLE…EQEP). Serine 149 carries the post-translational modification Phosphoserine. Serine 231, serine 232, serine 250, and serine 253 each carry phosphoserine. Residues 255–329 (TSKNLPPSGA…REAGEQGDIE (75 aa)) are disordered. Composition is skewed to basic and acidic residues over residues 297 to 307 (PQRDQRVREQR) and 318 to 329 (PIREAGEQGDIE). Residues 340–415 (HQLFIGNLPH…VRLNVEEKKT (76 aa)) form the RRM domain. Glycyl lysine isopeptide (Lys-Gly) (interchain with G-Cter in ubiquitin) cross-links involve residues lysine 353 and lysine 357. A Phosphoserine modification is found at serine 373. Lysine 376 is covalently cross-linked (Glycyl lysine isopeptide (Lys-Gly) (interchain with G-Cter in ubiquitin)). Lysine 376 bears the N6-acetyllysine; alternate mark. Lysine 376 participates in a covalent cross-link: Glycyl lysine isopeptide (Lys-Gly) (interchain with G-Cter in SUMO2); alternate. Lysine 393 is covalently cross-linked (Glycyl lysine isopeptide (Lys-Gly) (interchain with G-Cter in ubiquitin); alternate). An RG-rich region region spans residues 410–466 (VEEKKTRAAREGDRRDNRLRGPGGPRGGLGGGMRGPPRGGMVQKPGFGVGRGLAPRQ). Over residues 413-428 (KKTRAAREGDRRDNRL) the composition is skewed to basic and acidic residues. The segment at 413–466 (KKTRAAREGDRRDNRLRGPGGPRGGLGGGMRGPPRGGMVQKPGFGVGRGLAPRQ) is disordered. Residue arginine 429 is modified to Asymmetric dimethylarginine. Residues 430–447 (GPGGPRGGLGGGMRGPPR) are compositionally biased toward gly residues. The residue at position 435 (arginine 435) is an Asymmetric dimethylarginine; alternate. An omega-N-methylarginine; alternate mark is found at arginine 435, arginine 447, arginine 460, and arginine 465. At arginine 460 the chain carries Dimethylated arginine; alternate.

As to quaternary structure, homodimer and oligomer. Component of a TAU mRNP complex, at least composed of IGF2BP1, ELAVL4 and G3BP1. Binds to the SH3 domain of Ras GTPase-activating protein (RASA1) in proliferating cells. No interaction in quiescent cells. Interacts (via NTF2 domain) with USP10; inhibiting stress granule formation by lowering G3BP1 valence. Interacts (via NTF2 domain) with CAPRIN1; promoting stress granule formation by lowering the saturation-concentration of G3BP1. Interacts (via NTF2 domain) with UBAP2L; promoting stress granule formation. Associates (via RG-rich region) with 40S ribosome subunits. Interacts with RPTOR and SPAG5; this complex is increased by oxidative stress. Interacts with ATXN2L. Interacts with STYXL1. Interacts with CGAS (via N-terminus); this interaction promotes the DNA-binding and activation of CGAS. Interacts (via C-terminus) with RIGI. Interacts with PABPC1. Interacts with QKI (isoforms QKI6 and QKI7); directing N(7)-methylguanine-containing mRNAs to stress granules. Mg(2+) serves as cofactor. In terms of processing, phosphorylation of the acidic disordered region regulates stress granule assembly. RASA1-dependent phosphorylation of Ser-149 induces a conformational change that prevents self-association. Dephosphorylation after HRAS activation is required for stress granule assembly. Ser-149 phosphorylation induces partial nuclear localization. Arg-435 is dimethylated, probably to asymmetric dimethylarginine. Post-translationally, ubiquitinated by TRIM21 via 'Lys-63'-linked polyubiquitination in the NTF2 domain in response to heat shock, leading to stress granule disassembly: ubiquitination promotes interaction with the FAF2 adapter, followed by interaction with VCP, which extracts G3BP1 from stress granules, leading to stress granule disassembly. In case of prolonged stress, ubiquitination by TRIM21 leads to autophagy-dependent degradation of G3BP1 via recruitment of ubiquitinated G3BP1 by SQSTM1 and/or CALCOCO2 to autophagosomes.

The protein localises to the cytoplasm. Its subcellular location is the cytosol. It is found in the perikaryon. It localises to the stress granule. The protein resides in the nucleus. It catalyses the reaction ATP + H2O = ADP + phosphate + H(+). With respect to regulation, under physiological conditions, G3BP1 adopts a compact state that is stabilized by intramolecular interactions between the RG-rich and the acidic regions that inhibit phase separation. Upon stress, polysomes disassemble and mRNAs are released in an unfolded protein-free state. Binding of unfolded mRNA to G3BP1 outcompetes the intramolecular interactions and RNA-bound G3BP1 adopts an expanded conformation in which the RG-rich region becomes exposed to engage in protein-protein and protein-RNA interactions, allowing physical cross-linking of RNA molecules to form protein-RNA condensates, leading to liquid-liquid phase separation (LLPS). Functionally, protein involved in various processes, such as stress granule formation and innate immunity. Plays an essential role in stress granule formation. Stress granules are membraneless compartments that store mRNAs and proteins, such as stalled translation pre-initiation complexes, in response to stress. Promotes formation of stress granules phase-separated membraneless compartment by undergoing liquid-liquid phase separation (LLPS) upon unfolded RNA-binding: functions as a molecular switch that triggers RNA-dependent LLPS in response to a rise in intracellular free RNA concentrations. Also acts as an ATP- and magnesium-dependent helicase: unwinds DNA/DNA, RNA/DNA, and RNA/RNA substrates with comparable efficiency. Acts unidirectionally by moving in the 5' to 3' direction along the bound single-stranded DNA. Unwinds preferentially partial DNA and RNA duplexes having a 17 bp annealed portion and either a hanging 3' tail or hanging tails at both 5'- and 3'-ends. Plays an essential role in innate immunity by promoting CGAS and RIGI activity. Participates in the DNA-triggered cGAS/STING pathway by promoting the DNA binding and activation of CGAS. Triggers the condensation of cGAS, a process probably linked to the formation of membrane-less organelles. Also enhances RIGI-induced type I interferon production probably by helping RIGI at sensing pathogenic RNA. May also act as a phosphorylation-dependent sequence-specific endoribonuclease in vitro: Cleaves exclusively between cytosine and adenine and cleaves MYC mRNA preferentially at the 3'-UTR. The sequence is that of Ras GTPase-activating protein-binding protein 1 (G3BP1) from Pongo abelii (Sumatran orangutan).